Here is a 119-residue protein sequence, read N- to C-terminus: Phosphoribosyl-AMP cyclohydrolase (119 aa).

Asp77 is a binding site for Mg(2+). Residue Cys78 participates in Zn(2+) binding. Mg(2+)-binding residues include Asp79 and Asp81. Cys94 and Cys101 together coordinate Zn(2+).

It belongs to the PRA-CH family. Homodimer. It depends on Mg(2+) as a cofactor. Zn(2+) serves as cofactor.

Its subcellular location is the cytoplasm. The catalysed reaction is 1-(5-phospho-beta-D-ribosyl)-5'-AMP + H2O = 1-(5-phospho-beta-D-ribosyl)-5-[(5-phospho-beta-D-ribosylamino)methylideneamino]imidazole-4-carboxamide. It participates in amino-acid biosynthesis; L-histidine biosynthesis; L-histidine from 5-phospho-alpha-D-ribose 1-diphosphate: step 3/9. Catalyzes the hydrolysis of the adenine ring of phosphoribosyl-AMP. The protein is Phosphoribosyl-AMP cyclohydrolase of Cereibacter sphaeroides (strain ATCC 17025 / ATH 2.4.3) (Rhodobacter sphaeroides).